The chain runs to 238 residues: Purine nucleoside phosphorylase DeoD-type (238 aa).

A purine D-ribonucleoside is bound at residue His-5. Phosphate contacts are provided by residues Gly-21, Arg-25, Arg-44, and Arg-88–Ser-91. Residues Glu-180–Glu-182 and Ser-204–Asp-205 contribute to the a purine D-ribonucleoside site. Residue Asp-205 is the Proton donor of the active site.

The protein belongs to the PNP/UDP phosphorylase family. As to quaternary structure, homohexamer; trimer of homodimers.

The enzyme catalyses a purine D-ribonucleoside + phosphate = a purine nucleobase + alpha-D-ribose 1-phosphate. It catalyses the reaction a purine 2'-deoxy-D-ribonucleoside + phosphate = a purine nucleobase + 2-deoxy-alpha-D-ribose 1-phosphate. Functionally, catalyzes the reversible phosphorolytic breakdown of the N-glycosidic bond in the beta-(deoxy)ribonucleoside molecules, with the formation of the corresponding free purine bases and pentose-1-phosphate. The sequence is that of Purine nucleoside phosphorylase DeoD-type from Photorhabdus laumondii subsp. laumondii (strain DSM 15139 / CIP 105565 / TT01) (Photorhabdus luminescens subsp. laumondii).